A 125-amino-acid chain; its full sequence is Calcitonin receptor-stimulating peptide 2 (125 aa).

The first 25 residues, 1 to 25 (MGFWKFLPFLVLSFLVVYQAGMFQA), serve as a signal peptide directing secretion. Positions 26 to 77 (APFRSALENDFDPAILTEKEMCLLLAAVMNDYVQMKTSELKQEAEHFHITAQ) are excised as a propeptide. Residues Cys81 and Cys86 are joined by a disulfide bond.

This sequence belongs to the calcitonin family.

Its subcellular location is the secreted. This Capra hircus (Goat) protein is Calcitonin receptor-stimulating peptide 2 (CRSP2).